A 261-amino-acid polypeptide reads, in one-letter code: MKIQKNAVNVLERTSAYLRAGLLTKQPAWYNVVASVPPLKKFERVPKLTNPSNDRINGQLHSLDSSAGNNGMFKTRYTAKDRSNASKQLYSASKLTYIEDQLREIFYKQHPWELSRPKILIENNGDEKYDWSHMQQIGKPLDGESVVQRTLYLMKNKEAPSLVLAYDMARYEFYRLRMQQHIEEQVAQEEAEMFGSVFGPSAIEYGIQKEQKVIDTWKRKAIIQTEIMAARRINPSESWATDEKDPKKNDDIEEDVEEIKL.

Residues 234–261 (NPSESWATDEKDPKKNDDIEEDVEEIKL) are disordered. Positions 241-250 (TDEKDPKKND) are enriched in basic and acidic residues. The segment covering 251-261 (DIEEDVEEIKL) has biased composition (acidic residues).

This sequence belongs to the mitochondrion-specific ribosomal protein mS23 family. As to quaternary structure, component of the mitochondrial small ribosomal subunit.

Its subcellular location is the mitochondrion. The polypeptide is Small ribosomal subunit protein mS23 (RSM25) (Vanderwaltozyma polyspora (strain ATCC 22028 / DSM 70294 / BCRC 21397 / CBS 2163 / NBRC 10782 / NRRL Y-8283 / UCD 57-17) (Kluyveromyces polysporus)).